A 320-amino-acid polypeptide reads, in one-letter code: Polycomb complex protein BMI-1-A (320 aa).

Residues 18 to 57 (CVLCGGYFIDATTIIECLHSFCKMCIVRYLETSKYCPICD) form an RING-type zinc finger. Positions 81–95 (KLVPGLFKNEMKRRR) match the Nuclear localization signal motif. A disordered region spans residues 234–320 (ITHPQEGLNN…ALNGSSTSSG (87 aa)). Low complexity predominate over residues 262 to 281 (VPSTSSPLPSPSTLVQPSQP). Over residues 285 to 304 (HISSPINGTTMTSPNRQFNF) the composition is skewed to polar residues.

As to quaternary structure, component of a PRC1-like complex. Homodimer. Interacts with cbx2.

Its subcellular location is the nucleus. Its function is as follows. Component of a Polycomb group (PcG) multiprotein PRC1-like complex, a complex class required to maintain the transcriptionally repressive state of many genes, including Hox genes, throughout development. PcG PRC1 complex acts via chromatin remodeling and modification of histones; it mediates monoubiquitination of histone H2A 'Lys-119', rendering chromatin heritably changed in its expressibility. In the PRC1 complex, it is required to stimulate the E3 ubiquitin-protein ligase activity of rnf2. This chain is Polycomb complex protein BMI-1-A (bmi1a), found in Danio rerio (Zebrafish).